The sequence spans 765 residues: Zinc transporter ZIP6 (765 aa).

The first 20 residues, 1 to 20 (MATDLSVIMILTFALWVTSP), serve as a signal peptide directing secretion. Over 21–335 (LHELQSTAAF…PKTYSLQIAW (315 aa)) the chain is Extracellular. Asn68 carries N-linked (GlcNAc...) asparagine glycosylation. Composition is skewed to basic and acidic residues over residues 96 to 135 (DHEHHADHEHHSDHEHHSDHEHHSDHEHHSDHEHHSDHEH) and 174 to 186 (RPAEHMNGRRNIK). Disordered regions lie at residues 96-196 (DHEH…EVTS) and 209-257 (VETI…SEPR). Residues 187–196 (ESASSSEVTS) show a composition bias toward low complexity. Residues 224 to 233 (VNPSTPPSIT) show a composition bias toward polar residues. Residues 238–247 (VGRLSRLARK) show a composition bias toward basic residues. The span at 248–257 (KSNESVSEPR) shows a compositional bias: basic and acidic residues. 3 N-linked (GlcNAc...) asparagine glycosylation sites follow: Asn250, Asn275, and Asn292. Residues 336–356 (LGGFIAISIISFLSLLGVILV) traverse the membrane as a helical segment. Over 357-365 (PLMNRVFFK) the chain is Cytoplasmic. Residues 366–386 (FLLSFLVALAVGTLSGDALLH) form a helical membrane-spanning segment. Topologically, residues 387-433 (LLPHSHASHQHSHSHEEPAMEMKRGPLFSHLSAQNIEESSYFDSTWK) are extracellular. The chain crosses the membrane as a helical span at residues 434–454 (GLTALGGLYFMFLVEHVLTLI). The Cytoplasmic portion of the chain corresponds to 455–667 (KQFKDKKKKN…LKAGMTVKQA (213 aa)). Residues 458-519 (KDKKKKNQKK…EPSPFDSQQP (62 aa)) form a disordered region. The stretch at 475-495 (ESKKQLSKYDSQLSSNEEKVD) forms a coiled coil. Phosphoserine is present on residues Ser481 and Ser488. Residues 490 to 508 (NEEKVDPGERPESYLRADS) show a composition bias toward basic and acidic residues. The span at 509 to 519 (QEPSPFDSQQP) shows a compositional bias: polar residues. The chain crosses the membrane as a helical span at residues 668–688 (VLYNALSAMLAYLGMATGIFI). Residues 689–696 (GHYAENVS) lie on the Extracellular side of the membrane. An N-linked (GlcNAc...) asparagine glycan is attached at Asn694. The chain crosses the membrane as a helical span at residues 697–717 (MWIFALTAGLFMYVALVDMVP). The Cytoplasmic segment spans residues 718-734 (EMLHNDASDHGCSRWGY). The chain crosses the membrane as a helical span at residues 735–755 (FFLQNAGILLGFGIMLLISIF). Topologically, residues 756–765 (EHKIVFRINF) are extracellular.

Belongs to the ZIP transporter (TC 2.A.5) family. Interacts with SLC39A10; which triggers cells to undergo EMT and mitosis. Found in a complex with SLC39A6, SLC39A10 and with the 'Ser-727' phosphorylated form of STAT3 throughout mitosis. Found in a complex with SLC39A6, SLC39A10 and with NCAM1; this complex controls NCAM1 phosphorylation and integration into focal adhesion complexes during epithelial-to-mesenchymal transition (EMT). Found in a complex with SLC39A6, SLC39A10 and with GSK3B that controls NCAM1 phosphorylation. In terms of processing, cleaved on the N-terminus before locating to the plasma membrane. N-glycosylated. Post-translationally, phosphorylated by ZAP70 in response to TCR stimulation leading to its activation. Highly expressed in the brain and testis. In the brain strongly expressed in the CA1 and CA3 regions, Purkinje cells in cerebellum and dentate gyrus in hippocampus. In testis found in spermatids or mature sperms in the central areas of seminiferous tubules.

The protein resides in the cell membrane. Its subcellular location is the cell projection. It is found in the lamellipodium membrane. The protein localises to the membrane raft. It localises to the apical cell membrane. It catalyses the reaction Zn(2+)(in) = Zn(2+)(out). Its function is as follows. Zinc-influx transporter which plays a role in zinc homeostasis and in the induction of epithelial-to-mesenchymal transition (EMT). When associated with SLC39A10, the heterodimer formed by SLC39A10 and SLC39A6 mediates cellular zinc uptake to trigger cells to undergo epithelial- to-mesenchymal transition (EMT). The SLC39A10-SLC39A6 heterodimer also controls NCAM1 phosphorylation and its integration into focal adhesion complexes during EMT. Zinc influx inactivates GSK3B, enabling unphosphorylated SNAI1 in the nucleus to down-regulate adherence genes such as E-cadherin, causing loss of cell adherence. In addition, the SLC39A10-SLC39A6 heterodimer plays an essentiel role in initiating mitosis by importing zinc into cells to initiate a pathway resulting in the onset of mitosis. Participates in the T-cell receptor signaling regulation by mediating cellular zinc uptake into activated lymphocytes. Regulates the zinc influx necessary for proper meiotic progression to metaphase II (MII) that allows the oocyte-to-egg transition. The sequence is that of Zinc transporter ZIP6 from Mus musculus (Mouse).